Reading from the N-terminus, the 314-residue chain is Acetyl-coenzyme A carboxylase carboxyl transferase subunit alpha (314 aa).

Residues Glu-32–Ser-289 form the CoA carboxyltransferase C-terminal domain.

It belongs to the AccA family. In terms of assembly, acetyl-CoA carboxylase is a heterohexamer composed of biotin carboxyl carrier protein (AccB), biotin carboxylase (AccC) and two subunits each of ACCase subunit alpha (AccA) and ACCase subunit beta (AccD).

The protein localises to the cytoplasm. It carries out the reaction N(6)-carboxybiotinyl-L-lysyl-[protein] + acetyl-CoA = N(6)-biotinyl-L-lysyl-[protein] + malonyl-CoA. The protein operates within lipid metabolism; malonyl-CoA biosynthesis; malonyl-CoA from acetyl-CoA: step 1/1. Functionally, component of the acetyl coenzyme A carboxylase (ACC) complex. First, biotin carboxylase catalyzes the carboxylation of biotin on its carrier protein (BCCP) and then the CO(2) group is transferred by the carboxyltransferase to acetyl-CoA to form malonyl-CoA. In Staphylococcus aureus (strain NCTC 8325 / PS 47), this protein is Acetyl-coenzyme A carboxylase carboxyl transferase subunit alpha.